A 473-amino-acid polypeptide reads, in one-letter code: Aspartyl/glutamyl-tRNA(Asn/Gln) amidotransferase subunit B (473 aa).

It belongs to the GatB/GatE family. GatB subfamily. Heterotrimer of A, B and C subunits.

The enzyme catalyses L-glutamyl-tRNA(Gln) + L-glutamine + ATP + H2O = L-glutaminyl-tRNA(Gln) + L-glutamate + ADP + phosphate + H(+). It carries out the reaction L-aspartyl-tRNA(Asn) + L-glutamine + ATP + H2O = L-asparaginyl-tRNA(Asn) + L-glutamate + ADP + phosphate + 2 H(+). In terms of biological role, allows the formation of correctly charged Asn-tRNA(Asn) or Gln-tRNA(Gln) through the transamidation of misacylated Asp-tRNA(Asn) or Glu-tRNA(Gln) in organisms which lack either or both of asparaginyl-tRNA or glutaminyl-tRNA synthetases. The reaction takes place in the presence of glutamine and ATP through an activated phospho-Asp-tRNA(Asn) or phospho-Glu-tRNA(Gln). The chain is Aspartyl/glutamyl-tRNA(Asn/Gln) amidotransferase subunit B from Campylobacter hominis (strain ATCC BAA-381 / DSM 21671 / CCUG 45161 / LMG 19568 / NCTC 13146 / CH001A).